The sequence spans 365 residues: Probable flavin mononucleotide-dependent alkene reductase (365 aa).

FMN is bound by residues 30–32 (PLT), Ala-63, and Gln-105. The active-site Proton donor is Tyr-191. FMN-binding positions include Arg-238, Ser-303, and 324–325 (GT).

It belongs to the NADH:flavin oxidoreductase/NADH oxidase family. In terms of assembly, monomer. FMN serves as cofactor.

It localises to the cytoplasm. It is found in the cytosol. May function as a flavin mononucleotide (FMN)-dependent alkene reductase on substrates carrying alpha,beta-unsaturated carbonyl groups (ketones, aldehydes, carboxylic acids, esters, lactones or cyclic imides). The catalysis depends on NAD(P)H, which acts as a hydride donor for the reduction. Seems to be involved in metabolic pathways required for efficient replication of amastigotes within macrophages. In terms of biological role, acts as a FMN-dependent nitroreductase that activates anti-leishmanial bicyclic nitroaromatic prodrugs including delamanid, DNDI-VL-2098 and (R)-PA-824, forming toxic products that kill the parasites. The polypeptide is Probable flavin mononucleotide-dependent alkene reductase (Leishmania infantum).